We begin with the raw amino-acid sequence, 848 residues long: MSENNNDKITAKKTLTLKRSGSETNTVKQNFNHSRTKAVVVETKRRKIARPDEKTEMPQPITKPHVAPPRSKPRIEKPVLVTPTAQSNLSSTEMDARLRALEEAHIQDEIIRKQAAEKQIAERQAAEKQAKESEEGLHLQKTHKEKIQKSSSNTTKPTPLFSSTVSPIESIEAALTLKNTAASKRKADENDDDEKYNRRANLSKSEIRAPKIIKGTDERRRGKLTLNSALDEEGNSRGRSMAAMRRRQEKFKRAQNQEPREKISREVILPETITIQELAQRMAERSVDVIKFLMKQEQMMKPGDVIDADIAELIAIEFGHTVKRVSESDIEEGIFNVDDDPQKMKTRPPIVTIMGHVDHGKTSLLDAIRKANVVSSEAGGITQHIGAYQVEQNGQKITFIDTPGHAAFTAMRARGAQITDIAVLVVAADDSVMPQTIESINHAKAANVPIIVAINKIDKPTADAQKVRTELLQHEVFVETMGGETLEVEVSAKTGQNLDKLLEAILLQAEILDLKADSERTADGIVIEAKLDQGRGSVATVLVQKGTLHLSDIIVAGNEWGRIRALIDDHGNHIKTASPSTPVEILGMQGTPQAGDRFAVVAHEAKAREIAEYRQRLARDKAAARKTGSRSSLEQMMTKLQTVGVKEFSLIIKGDVQGSIEAITAALEKLGNEEVQTRIVHSGAGGITESDISLAETSNSVVIGFNVRANKQVRDLAETQGIEIRYYNIIYDLVDDIKAAMSGLLSPEKRETFLGNAEILEIFNITKIGKVAGCQVTEGKIERGAGVRLIRDNIVIHEGKLKTLKRFKDEVNEVQIGQECGIAFEKYEDMRAGDTIEIFRVEHVNRTL.

The segment covering 1–10 has biased composition (basic and acidic residues); sequence MSENNNDKIT. Disordered stretches follow at residues 1-79 and 121-163; these read MSEN…EKPV and AERQ…LFSS. Over residues 17–33 the composition is skewed to polar residues; the sequence is LKRSGSETNTVKQNFNH. Residues 121 to 138 show a composition bias toward basic and acidic residues; the sequence is AERQAAEKQAKESEEGLH. Residues 149–163 show a composition bias toward polar residues; that stretch reads KSSSNTTKPTPLFSS. Residues 346-513 enclose the tr-type G domain; the sequence is TRPPIVTIMG…AILLQAEILD (168 aa). The G1 stretch occupies residues 355 to 362; it reads GHVDHGKT. Residue 355–362 participates in GTP binding; that stretch reads GHVDHGKT. Residues 380-384 are G2; sequence GITQH. The tract at residues 401 to 404 is G3; it reads DTPG. GTP is bound by residues 401-405 and 455-458; these read DTPGH and NKID. Residues 455–458 are G4; the sequence is NKID. Positions 491–493 are G5; the sequence is SAK.

It belongs to the TRAFAC class translation factor GTPase superfamily. Classic translation factor GTPase family. IF-2 subfamily.

It is found in the cytoplasm. In terms of biological role, one of the essential components for the initiation of protein synthesis. Protects formylmethionyl-tRNA from spontaneous hydrolysis and promotes its binding to the 30S ribosomal subunits. Also involved in the hydrolysis of GTP during the formation of the 70S ribosomal complex. This is Translation initiation factor IF-2 from Bartonella bacilliformis (strain ATCC 35685 / KC583 / Herrer 020/F12,63).